Here is a 302-residue protein sequence, read N- to C-terminus: uncharacterized protein (302 aa).

This is an uncharacterized protein from Ictaluridae (bullhead catfishes).